The primary structure comprises 140 residues: uncharacterized protein (140 aa).

This is an uncharacterized protein from Xylella fastidiosa (strain 9a5c).